The primary structure comprises 61 residues: Temporin-CG3 (61 aa).

The N-terminal stretch at 1 to 22 is a signal peptide; the sequence is MFTMKKPLLLLFFLATINLSLC. A propeptide spans 23-44 (removed in mature form); it reads EQERNAEEERRDEPDERNAEVE.

It belongs to the frog skin active peptide (FSAP) family. Temporin subfamily. As to expression, expressed by the skin glands.

The protein resides in the secreted. Functionally, antimicrobial peptide active against a variety of Gram-positive bacterial strains but not against Gram-negative bacteria. Has weak antifungal activity against a slime mold isolate. Has weak hemolytic activity against human erythrocytes. This Amolops chunganensis (Chungan torrent frog) protein is Temporin-CG3.